A 121-amino-acid polypeptide reads, in one-letter code: Small ribosomal subunit protein uS13 (121 aa).

Residues 94–121 (GLPMRGQRTRTNARTRKGPRKGAAALKK) are disordered.

Belongs to the universal ribosomal protein uS13 family. Part of the 30S ribosomal subunit. Forms a loose heterodimer with protein S19. Forms two bridges to the 50S subunit in the 70S ribosome.

Located at the top of the head of the 30S subunit, it contacts several helices of the 16S rRNA. In the 70S ribosome it contacts the 23S rRNA (bridge B1a) and protein L5 of the 50S subunit (bridge B1b), connecting the 2 subunits; these bridges are implicated in subunit movement. Contacts the tRNAs in the A and P-sites. The protein is Small ribosomal subunit protein uS13 of Delftia acidovorans (strain DSM 14801 / SPH-1).